The following is a 242-amino-acid chain: Terpene cyclase dpchB (242 aa).

7 consecutive transmembrane segments (helical) span residues 16 to 36 (VVWI…ANYV), 51 to 71 (ALLP…MYAF), 78 to 95 (YVHF…YTAV), 114 to 134 (LIFV…AKQV), 141 to 161 (AWSA…QLLC), 169 to 189 (SYFL…QDII), and 207 to 227 (IWFV…LWYV).

This sequence belongs to the paxB family.

It is found in the membrane. It functions in the pathway secondary metabolite biosynthesis; terpenoid biosynthesis. Its function is as follows. Terpene cyclase; part of the gene cluster that mediates the biosynthesis of the diterpenoid pyrones higginsianins A and B. The first step of the pathway is the synthesis of the alpha-pyrone moiety by the polyketide synthase dpchA via condensation of one acetyl-CoA starter unit with 3 malonyl-CoA units and 2 methylations. The alpha-pyrone is then combined with geranylgeranyl pyrophosphate (GGPP) formed by the GGPP synthase dpchD through the action of the prenyltransferase dpchC to yield a linear alpha-pyrone diterpenoid. Subsequent steps in the diterpenoid pyrone biosynthetic pathway involve the decalin core formation, which is initiated by the epoxidation of the C10-C11 olefin by the FAD-dependent oxidoreductase dpchE, and is followed by a cyclization cascade catalyzed by the terpene cyclase dpchB. The short chain dehydrogenase/reductase dpchG then oxidizes the 8S hydroxy group to a ketone and the short chain dehydrogenase/reductase dpchH reduces the ketone to the 8R hydroxy group to yield higginsianin B. Finally, the FAD-dependent oxidoreductase dpchF converts higginsianin B into higginsianin A. This chain is Terpene cyclase dpchB, found in Colletotrichum higginsianum (strain IMI 349063) (Crucifer anthracnose fungus).